A 372-amino-acid chain; its full sequence is tRNA-specific 2-thiouridylase MnmA (372 aa).

ATP is bound by residues Gly-16–Ser-23 and Met-42. The tract at residues Asn-102–Asp-104 is interaction with target base in tRNA. The Nucleophile role is filled by Cys-107. Residues Cys-107 and Cys-205 are joined by a disulfide bond. Gly-132 contacts ATP. The segment at Lys-155 to Gln-157 is interaction with tRNA. Cys-205 serves as the catalytic Cysteine persulfide intermediate. The interval Arg-317–Tyr-318 is interaction with tRNA.

It belongs to the MnmA/TRMU family.

It is found in the cytoplasm. It catalyses the reaction S-sulfanyl-L-cysteinyl-[protein] + uridine(34) in tRNA + AH2 + ATP = 2-thiouridine(34) in tRNA + L-cysteinyl-[protein] + A + AMP + diphosphate + H(+). Catalyzes the 2-thiolation of uridine at the wobble position (U34) of tRNA, leading to the formation of s(2)U34. The chain is tRNA-specific 2-thiouridylase MnmA from Shewanella sp. (strain MR-7).